The sequence spans 582 residues: Protein alan shepard (582 aa).

Residues 1 to 12 are compositionally biased toward pro residues; it reads MHPRYSPAPPPQ. Residues 1–73 form a disordered region; it reads MHPRYSPAPP…AAPPTSRSAF (73 aa). The residue at position 5 (Y5) is a Phosphotyrosine. A compositionally biased stretch (low complexity) spans 13-24; the sequence is QQQQMGGPLHQQ. Gly residues predominate over residues 25–36; sequence QGGGGGGGGGIR. Positions 39 to 57 are enriched in polar residues; sequence SNAQQLPPQIPRSQNYSNG. Residues 58–72 are compositionally biased toward low complexity; that stretch reads SSSSAAAAPPTSRSA. 2 positions are modified to phosphotyrosine: Y125 and Y142. The segment at 164–225 is disordered; the sequence is PATTTYGQRV…TVQNQNQQGG (62 aa). Residues 178-225 show a composition bias toward low complexity; the sequence is SPSNTNSSSSSNTGSQSGTLSTSLSNTTNTNTNMGPNGTVQNQNQQGG. 2 RRM domains span residues 231–304 and 310–389; these read TNLY…MAKQ and TNLY…FADG. Positions 555–582 are disordered; that stretch reads PMTDSEQASTAASPDEAYTQYPHQAAPK.

Its function is as follows. Has a role in the perception of gravity. This chain is Protein alan shepard, found in Drosophila yakuba (Fruit fly).